The sequence spans 516 residues: Na(+)/H(+) antiporter NhaB (516 aa).

12 consecutive transmembrane segments (helical) span residues 23 to 43 (LALI…PFVA), 61 to 80 (CYPL…IGMT), 97 to 117 (LLLI…LFVF), 120 to 140 (LLLG…AAAF), 144 to 164 (FLDA…FYGI), 202 to 222 (LMMH…VGEP), 238 to 258 (FFIR…LTCL), 303 to 323 (AVIG…VGLI), 348 to 368 (TEAL…AVII), 391 to 411 (LFYL…VGTV), 447 to 467 (ATPN…APLI), and 475 to 495 (VWMA…CVEF).

This sequence belongs to the NhaB Na(+)/H(+) (TC 2.A.34) antiporter family.

The protein resides in the cell inner membrane. It carries out the reaction 2 Na(+)(in) + 3 H(+)(out) = 2 Na(+)(out) + 3 H(+)(in). Functionally, na(+)/H(+) antiporter that extrudes sodium in exchange for external protons. This chain is Na(+)/H(+) antiporter NhaB, found in Klebsiella pneumoniae (strain 342).